We begin with the raw amino-acid sequence, 289 residues long: Probable endonuclease 4 (289 aa).

Zn(2+) contacts are provided by His75, His115, Glu153, Asp187, His190, His224, Asp237, His239, and Glu269.

The protein belongs to the AP endonuclease 2 family. Zn(2+) serves as cofactor.

It carries out the reaction Endonucleolytic cleavage to 5'-phosphooligonucleotide end-products.. Endonuclease IV plays a role in DNA repair. It cleaves phosphodiester bonds at apurinic or apyrimidinic (AP) sites, generating a 3'-hydroxyl group and a 5'-terminal sugar phosphate. This chain is Probable endonuclease 4, found in Chlamydia caviae (strain ATCC VR-813 / DSM 19441 / 03DC25 / GPIC) (Chlamydophila caviae).